The sequence spans 434 residues: Pre-B-cell leukemia transcription factor 3 (434 aa).

The interval 20-41 (SVQGGMALPPPPHGHEGADGDG) is disordered. Basic and acidic residues predominate over residues 32–41 (HGHEGADGDG). The PBC domain occupies 41–234 (GRKQDIGDIL…VMILRSRFLD (194 aa)). The tract at residues 48–127 (DILHQIMTIT…EGVSGPEKGG (80 aa)) is PBC-A. The segment at 130 to 234 (AAAAAAAAAS…VMILRSRFLD (105 aa)) is PBC-B. The homeobox; TALE-type DNA-binding region spans 235 to 297 (ARRKRRNFSK…NKRIRYKKNI (63 aa)). Residues 326–341 (NQTNSPTTPNSGSSGS) are compositionally biased toward low complexity. Disordered regions lie at residues 326–349 (NQTNSPTTPNSGSSGSFNLPNSGD) and 403–434 (LNANGGWQDATTPSSVTSPTEGPGSVHSDTSN). Positions 403 to 422 (LNANGGWQDATTPSSVTSPT) are enriched in polar residues.

The protein belongs to the TALE/PBX homeobox family. In terms of assembly, interacts with PBXIP1. Ubiquitously expressed.

The protein localises to the nucleus. In terms of biological role, transcriptional activator that binds the sequence 5'-ATCAATCAA-3'. The polypeptide is Pre-B-cell leukemia transcription factor 3 (PBX3) (Homo sapiens (Human)).